Here is a 252-residue protein sequence, read N- to C-terminus: Trypsin iota (252 aa).

The signal sequence occupies residues M1–A19. Residues S20–R27 constitute a propeptide, activation peptide. One can recognise a Peptidase S1 domain in the interval I28–N250. C53 and C69 are oxidised to a cystine. Active-site charge relay system residues include H68 and D113. Cystine bridges form between C175–C193 and C202–C226. S206 (charge relay system) is an active-site residue.

Belongs to the peptidase S1 family.

It localises to the secreted. The protein resides in the extracellular space. The enzyme catalyses Preferential cleavage: Arg-|-Xaa, Lys-|-Xaa.. The chain is Trypsin iota (iotaTry) from Drosophila melanogaster (Fruit fly).